Consider the following 224-residue polypeptide: uncharacterized protein (224 aa).

The chain crosses the membrane as a helical span at residues 21–41; that stretch reads LTVILIIPIVYLGVCGCFEIV.

It localises to the membrane. This is an uncharacterized protein from Methanocaldococcus jannaschii (strain ATCC 43067 / DSM 2661 / JAL-1 / JCM 10045 / NBRC 100440) (Methanococcus jannaschii).